We begin with the raw amino-acid sequence, 169 residues long: Large ribosomal subunit protein uL5 (169 aa).

This sequence belongs to the universal ribosomal protein uL5 family. Part of the 50S ribosomal subunit; contacts the 5S rRNA and probably tRNA. Forms a bridge to the 30S subunit in the 70S ribosome.

Functionally, this is one of the proteins that bind and probably mediate the attachment of the 5S RNA into the large ribosomal subunit, where it forms part of the central protuberance. In the 70S ribosome it contacts protein S13 of the 30S subunit (bridge B1b), connecting the 2 subunits; this bridge is implicated in subunit movement. May contact the P site tRNA; the 5S rRNA and some of its associated proteins might help stabilize positioning of ribosome-bound tRNAs. The protein is Large ribosomal subunit protein uL5 of Nanoarchaeum equitans (strain Kin4-M).